A 416-amino-acid polypeptide reads, in one-letter code: Phakinin (416 aa).

The interval 1-48 is disordered; sequence MSKRRVAADLPSGTNSSMPVQRHRVSSLRGTHSPSSLDSPPASRTSAV. S2 bears the N-acetylserine mark. The head stretch occupies residues 2–115; that stretch reads SKRRVAADLP…HTTVEDLGGC (114 aa). 4 positions are modified to phosphoserine: S27, S33, S36, and S91. Polar residues predominate over residues 28 to 48; it reads LRGTHSPSSLDSPPASRTSAV. The IF rod domain occupies 105-416; it reads DHTTVEDLGG…HALLDREENN (312 aa). 3 coiled-coil regions span residues 116-146, 170-249, and 308-402; these read LVEY…SKAK, LENA…VKVL, and QTQE…LQKD. The segment at 397 to 416 is tail; sequence SQLQKDVASYHALLDREENN.

The protein belongs to the intermediate filament family. As to quaternary structure, part of a complex required for lens intermediate filament formation composed of BFSP1, BFSP2 and CRYAA. Found in a complex composed of PPL (via C-terminal linker domain), BFSP1 and BFSP2 in the retinal lens. Within the complex interacts with PPL (via C-terminal linker domain) and with BFSP1. Identified in a complex that contains VIM, EZR, AHNAK, BFSP1, BFSP2, ANK2, PLEC, PRX and spectrin. Interacts with LGSN. Interacts with VIM. As to expression, detected in retina lens fiber cells (at protein level). Also expressed in the lens epithelium, abundantly expressed in the anterior and anterolateral epithelium, less frequently expressed nearer the lens coronal equator (at protein level).

It is found in the cell membrane. Its subcellular location is the cytoplasm. The protein localises to the cytoskeleton. The protein resides in the cell cortex. Functionally, required for the correct formation of lens intermediate filaments as part of a complex composed of BFSP1, BFSP2 and CRYAA. Plays a role in maintenance of retinal lens optical clarity. In Mus musculus (Mouse), this protein is Phakinin (Bfsp2).